The sequence spans 60 residues: Large ribosomal subunit protein uL30 (60 aa).

This sequence belongs to the universal ribosomal protein uL30 family. In terms of assembly, part of the 50S ribosomal subunit.

This Nocardioides sp. (strain ATCC BAA-499 / JS614) protein is Large ribosomal subunit protein uL30.